An 84-amino-acid polypeptide reads, in one-letter code: Metallothionein type 2b (84 aa).

Belongs to the metallothionein superfamily. Type 15 family. Expressed in leaves, stems and roots.

The protein localises to the cytoplasm. It localises to the nucleus. Functionally, metallothioneins have a high content of cysteine residues that bind various heavy metals. Probably involved in maintaining homeostasis of essential transition metals and detoxification of toxic metals. Increases cadmium and zinc tolerance when expressed in heterologous systems. Metal chelator binding 6 cadmium or 5 zinc atoms per protein. The chain is Metallothionein type 2b from Colocasia esculenta (Wild taro).